The chain runs to 182 residues: Transmembrane and coiled-coil domain-containing protein 2 (182 aa).

The helical transmembrane segment at 51–71 (VQIILRISFLILLGIGIYALW) threads the bilayer. Residues 124–151 (GLQEKILKKLKTVENKMKNLEGIIVAQK) are a coiled coil.

It is found in the membrane. In Homo sapiens (Human), this protein is Transmembrane and coiled-coil domain-containing protein 2 (TMCO2).